The sequence spans 476 residues: MDDAGGLGGSGGFRPGVDSLDEPPNSRIFLVISKHTSELVLRERFSPFGDIQDIWVVRDKHTKESKGVAFVKFARSSQACRAMEEMHGQCLGPSDTKPIKVFIAQSRSSGSHRDVEDEELTRIFVMIPKSYTEEDLREKFKVYGDIEYCSIIKNKVTGESKGLGYVRYLKPSQAAQAIENCDRSFRALLAEPKNKVSGSPEQDDYSSGRQEALGQEPRANLFPFVGEQQSEFSTFDKNDSRGQEAVSKRLSVVSRVPFTEEQLFSIFDIVPGLEYCEVPRDPYSNYGHGVVQYFNVASAIYAKYKLHGFQYPPGNRIVVSFLDDGSNMTELIRKMATQMVAAQLASMVWSTTSQQQFLQYGGNAASQAPQIQTDVVLPSCKKKAPPETPVKERLFVVFNPHPLPLDVLEDIFCRFGNLIEVYLVSGKNVGYVKYADRKSANEAITTLHGKILNGVRLKVMLADSPREESKKRQRTY.

Positions methionine 1 to arginine 14 are enriched in gly residues. The segment at methionine 1–leucine 20 is disordered. 2 consecutive RRM domains span residues serine 26–serine 106 and threonine 121–proline 192. Lysine 34 is covalently cross-linked (Glycyl lysine isopeptide (Lys-Gly) (interchain with G-Cter in SUMO2)). The segment at proline 192–alanine 212 is disordered. Residues valine 196 to arginine 209 show a composition bias toward polar residues. Residues serine 199 and serine 464 each carry the phosphoserine modification. In terms of domain architecture, RRM 3 spans glutamate 392 to serine 464.

It localises to the cytoplasm. The protein resides in the nucleus. Functionally, RNA-binding protein with binding specificity for poly(C). May play an important role in neural development. The chain is RNA-binding protein 45 (Rbm45) from Mus musculus (Mouse).